Reading from the N-terminus, the 220-residue chain is MELDQDQKVETPEAAENGKDEMQLEEQTQDEDTTETETETETETEAEAEGADGTILERTESVKAKLVPQAEKQIQDEKTGIKEADRAIQEQTQDDETEAEGADGAILKRSESVKVKLIPQAEKQIQDEKTGIKEADRAIQELPANAELAGVKIQAWWRGTLVRRTLLLAILSAWTIQSWWKETKSRLQGRKLHDVMRCRLRNLNLKSISRRKRPNQSSFL.

Residues 1-22 (MELDQDQKVETPEAAENGKDEM) show a composition bias toward basic and acidic residues. Positions 1–81 (MELDQDQKVE…KQIQDEKTGI (81 aa)) are disordered. A compositionally biased stretch (acidic residues) spans 23-50 (QLEEQTQDEDTTETETETETETEAEAEG). The stretch at 69–93 (QAEKQIQDEKTGIKEADRAIQEQTQ) forms a coiled coil. The IQ domain maps to 146 to 175 (AELAGVKIQAWWRGTLVRRTLLLAILSAWT).

The chain is IQ domain-containing protein F3 (Iqcf3) from Rattus norvegicus (Rat).